A 193-amino-acid polypeptide reads, in one-letter code: Potassium-transporting ATPase KdpC subunit (193 aa).

The helical transmembrane segment at 14-34 (ITFTFLVLCGLVYPLIVTGIA) threads the bilayer.

Belongs to the KdpC family. In terms of assembly, the system is composed of three essential subunits: KdpA, KdpB and KdpC.

The protein resides in the cell membrane. Part of the high-affinity ATP-driven potassium transport (or Kdp) system, which catalyzes the hydrolysis of ATP coupled with the electrogenic transport of potassium into the cytoplasm. This subunit acts as a catalytic chaperone that increases the ATP-binding affinity of the ATP-hydrolyzing subunit KdpB by the formation of a transient KdpB/KdpC/ATP ternary complex. The polypeptide is Potassium-transporting ATPase KdpC subunit (Bacillus cereus (strain ATCC 14579 / DSM 31 / CCUG 7414 / JCM 2152 / NBRC 15305 / NCIMB 9373 / NCTC 2599 / NRRL B-3711)).